Reading from the N-terminus, the 144-residue chain is Ribosome maturation factor RimP (144 aa).

Belongs to the RimP family.

The protein resides in the cytoplasm. In terms of biological role, required for maturation of 30S ribosomal subunits. The protein is Ribosome maturation factor RimP of Azoarcus sp. (strain BH72).